We begin with the raw amino-acid sequence, 304 residues long: Non-specific ribonucleoside hydrolase RihC (304 aa).

His235 is an active-site residue.

This sequence belongs to the IUNH family. RihC subfamily.

Functionally, hydrolyzes both purine and pyrimidine ribonucleosides with a broad-substrate specificity. This chain is Non-specific ribonucleoside hydrolase RihC, found in Salmonella paratyphi A (strain ATCC 9150 / SARB42).